Here is a 259-residue protein sequence, read N- to C-terminus: UPF0246 protein RD1_0358 (259 aa).

Belongs to the UPF0246 family.

The polypeptide is UPF0246 protein RD1_0358 (Roseobacter denitrificans (strain ATCC 33942 / OCh 114) (Erythrobacter sp. (strain OCh 114))).